The chain runs to 77 residues: U8-lycotoxin-Ls1m (77 aa).

The signal sequence occupies residues 1–20; it reads MKLMIFTGLVLFAIVSLIEA. Residues 21–26 constitute a propeptide that is removed on maturation; the sequence is QAENEK.

Belongs to the neurotoxin 19 (CSTX) family. 08 (U8-Lctx) subfamily. In terms of processing, contains 4 disulfide bonds. As to expression, expressed by the venom gland.

Its subcellular location is the secreted. The chain is U8-lycotoxin-Ls1m from Lycosa singoriensis (Wolf spider).